Here is a 264-residue protein sequence, read N- to C-terminus: ATP synthase subunit a (264 aa).

The next 6 helical transmembrane spans lie at 29-49, 87-107, 134-154, 177-197, 208-228, and 235-255; these read TWHI…LWIF, NALI…MNFM, DLNI…YYSI, IPVN…SLAL, LIFI…SLGV, and LIFH…LTIV.

Belongs to the ATPase A chain family. As to quaternary structure, F-type ATPases have 2 components, CF(1) - the catalytic core - and CF(0) - the membrane proton channel. CF(1) has five subunits: alpha(3), beta(3), gamma(1), delta(1), epsilon(1). CF(0) has three main subunits: a(1), b(2) and c(9-12). The alpha and beta chains form an alternating ring which encloses part of the gamma chain. CF(1) is attached to CF(0) by a central stalk formed by the gamma and epsilon chains, while a peripheral stalk is formed by the delta and b chains.

The protein localises to the cell inner membrane. In terms of biological role, key component of the proton channel; it plays a direct role in the translocation of protons across the membrane. The polypeptide is ATP synthase subunit a (Shewanella amazonensis (strain ATCC BAA-1098 / SB2B)).